Here is a 402-residue protein sequence, read N- to C-terminus: Odorant receptor 22c (402 aa).

The Cytoplasmic segment spans residues 1–42 (MTDSGQPAIADHFYRIPRISGLIVGLWPQRIRGGGGRPWHAH). A helical membrane pass occupies residues 43-63 (LLFVFAFAMVVVGAVGEVSYG). Over 64-73 (CVHLDNLVVA) the chain is Extracellular. Residues 74–94 (LEAFCPGTTKAVCVLKLWVFF) traverse the membrane as a helical segment. The Cytoplasmic portion of the chain corresponds to 95–134 (RSNRRWAELVQRLRAILWESRRQEAQRMLVGLATTANRLS). Residues 135-155 (LLLLSSGTATNAAFTLQPLIM) form a helical membrane-spanning segment. The Extracellular portion of the chain corresponds to 156–173 (GLYRWIVQLPGQTELPFN). A helical transmembrane segment spans residues 174 to 194 (IILPSFAVQPGVFPLTYVLLT). Over 195 to 201 (ASGACTV) the chain is Cytoplasmic. The helical transmembrane segment at 202-222 (FAFSFVDGFFICSCLYICGAF) threads the bilayer. Topologically, residues 223 to 276 (RLVQQDIRRIFADLHGDSVDVFTEEMNAEVRHRLAQVVERHNAIIDFCTDLTRQ) are extracellular. The chain crosses the membrane as a helical span at residues 277–297 (FTVIVLMHFLSAAFVLCSTIL). At 298–307 (DIMLNTSSLS) the chain is on the cytoplasmic side. Residues 308–328 (GLTYICYIIAALTQLFLYCFG) form a helical membrane-spanning segment. The Extracellular segment spans residues 329–402 (GNHVSESSAA…SYITLLKTFL (74 aa)).

The protein belongs to the insect chemoreceptor superfamily. Heteromeric odorant receptor channel (TC 1.A.69) family. Or1a subfamily. As to quaternary structure, interacts with Orco. Complexes exist early in the endomembrane system in olfactory sensory neurons (OSNs), coupling these complexes to the conserved ciliary trafficking pathway. Not expressed in either the antenna or maxillary palp.

Its subcellular location is the cell membrane. Its function is as follows. Odorant receptor which mediates acceptance or avoidance behavior, depending on its substrates. The odorant receptor repertoire encodes a large collection of odor stimuli that vary widely in identity, intensity, and duration. May form a complex with Orco to form odorant-sensing units, providing sensitive and prolonged odorant signaling and calcium permeability. The sequence is that of Odorant receptor 22c (Or22c) from Drosophila melanogaster (Fruit fly).